Consider the following 434-residue polypeptide: Adenylosuccinate synthetase (434 aa).

GTP-binding positions include 22-28 (GDEGKGK) and 50-52 (GHT). D23 serves as the catalytic Proton acceptor. Mg(2+) is bound by residues D23 and G50. Residues 23–26 (DEGK), 48–51 (NAGH), T139, R153, Q234, T249, and R313 each bind IMP. The active-site Proton donor is H51. 309 to 315 (ATTGRKR) lines the substrate pocket. GTP-binding positions include R315, 341-343 (KLD), and 423-425 (SVG).

Belongs to the adenylosuccinate synthetase family. Homodimer. It depends on Mg(2+) as a cofactor.

It localises to the cytoplasm. It carries out the reaction IMP + L-aspartate + GTP = N(6)-(1,2-dicarboxyethyl)-AMP + GDP + phosphate + 2 H(+). The protein operates within purine metabolism; AMP biosynthesis via de novo pathway; AMP from IMP: step 1/2. In terms of biological role, plays an important role in the de novo pathway of purine nucleotide biosynthesis. Catalyzes the first committed step in the biosynthesis of AMP from IMP. The sequence is that of Adenylosuccinate synthetase from Chlorobium chlorochromatii (strain CaD3).